The primary structure comprises 791 residues: von Willebrand factor A domain-containing protein 2 (791 aa).

The N-terminal stretch at M1–S23 is a signal peptide. The region spanning D51 to L221 is the VWFA 1 domain. N-linked (GlcNAc...) asparagine glycosylation occurs at N146. An EGF-like 1 domain is found at P295–A332. Disulfide bonds link C298-C309, C303-C319, and C321-C331. VWFA domains are found at residues D342 to L516 and D530 to L704. The 37-residue stretch at P711 to E747 folds into the EGF-like 2 domain. 3 disulfides stabilise this stretch: C715-C726, C720-C735, and C737-C746. The segment at H762–K791 is disordered.

Forms monomers and multimers. As to expression, detected in uterus, kidney, and skin. Also detected in intestine and lung of adult mice, and in calvaria, femur, brain, heart, intestine, skeletal muscle, and lung of newborn mice.

Its subcellular location is the secreted. The sequence is that of von Willebrand factor A domain-containing protein 2 (Vwa2) from Mus musculus (Mouse).